Reading from the N-terminus, the 257-residue chain is Snake venom serine protease Dav-KN (257 aa).

The first 18 residues, 1-18, serve as a signal peptide directing secretion; sequence MVLIRVLANLLILQLSYA. Residues 19–24 constitute a propeptide that is removed on maturation; it reads QKSSEL. Positions 25 to 248 constitute a Peptidase S1 domain; the sequence is VIGGDECNIN…HLDWIKGIIA (224 aa). Cystine bridges form between cysteine 31–cysteine 162, cysteine 49–cysteine 65, cysteine 97–cysteine 255, cysteine 173–cysteine 188, and cysteine 199–cysteine 224. Active-site charge relay system residues include histidine 64 and aspartate 109. Serine 203 (charge relay system) is an active-site residue.

It belongs to the peptidase S1 family. Snake venom subfamily. As to quaternary structure, monomer. In terms of tissue distribution, expressed by the venom gland.

Its subcellular location is the secreted. Snake venom serine protease that may act in the hemostasis system of the prey. In Deinagkistrodon acutus (Hundred-pace snake), this protein is Snake venom serine protease Dav-KN.